Reading from the N-terminus, the 87-residue chain is MANIKSAQKRILVINKKTARNRMIKSQLKTAIRRFEESLAAGNFEEAKTRLKLVEKKLHQAAAKGTIHKAKASRKVSRLATKLNKAI.

Belongs to the bacterial ribosomal protein bS20 family.

Binds directly to 16S ribosomal RNA. In Alkaliphilus oremlandii (strain OhILAs) (Clostridium oremlandii (strain OhILAs)), this protein is Small ribosomal subunit protein bS20.